The chain runs to 426 residues: Oligouridylate-binding protein 1A (426 aa).

The interval 1-26 (MQNQRLIKQQQQQQQQQHQQAMIQQA) is disordered. Residues 9–26 (QQQQQQQQQHQQAMIQQA) show a composition bias toward low complexity. RRM domains are found at residues 63–137 (RSVY…WAYA) and 148–226 (FNIF…WATK). The tract at residues 230-268 (FGEDKHSSDGKSVVELTNGSSEDGRELSNEDAPENNPQF) is disordered. Serine 250 bears the Phosphoserine mark. An RRM 3 domain is found at 269–344 (TTVYVGNLSP…RQIRCSWGNK (76 aa)).

Interacts with UBA1A and UBA2A.

Its subcellular location is the nucleus. Functionally, heterogeneous nuclear ribonucleoprotein (hnRNP)-like protein that acts as a component of the pre-mRNA processing machinery. Functions to facilitate the nuclear maturation of plant pre-mRNAs. This Arabidopsis thaliana (Mouse-ear cress) protein is Oligouridylate-binding protein 1A (UBP1A).